Consider the following 823-residue polypeptide: Zygotic DNA replication licensing factor mcm6-A (823 aa).

The C4-type zinc finger occupies 159 to 186 (CLDCQTLVRDVEQQFKYTQPSICRNPVC). Residues 347–554 (LYHNLCTSLF…TDYAIARRIV (208 aa)) enclose the MCM domain. 397-404 (GDPSTAKS) lines the ATP pocket. Residues 529-532 (SRFD) carry the Arginine finger motif. Residues 663 to 710 (PDVNLDQDDEHEPEDETQEGTNGDAEVPNGVNGHVNGINGHSQESNAA) are disordered. The span at 667–680 (LDQDDEHEPEDETQ) shows a compositional bias: acidic residues. The span at 691 to 703 (NGVNGHVNGINGH) shows a compositional bias: low complexity.

This sequence belongs to the MCM family. Component of the mcm2-7 complex (RLF-M). The complex forms a toroidal hexameric ring with the proposed subunit order mcm2-mcm6-mcm4-mcm7-mcm3-mcm5 (By simililarity). Begins to associate with zmcm3, mcm4 and mcm7 into mcm complexes at the neurula stage. May replace mmcm6 in the complex that functions during licensing of DNA replication.

Its subcellular location is the nucleus. It carries out the reaction ATP + H2O = ADP + phosphate + H(+). Functionally, acts as a component of the mcm2-7 complex (mcm complex) which is the putative replicative helicase essential for 'once per cell cycle' DNA replication initiation and elongation in eukaryotic cells. The active ATPase sites in the mcm2-7 ring are formed through the interaction surfaces of two neighboring subunits such that a critical structure of a conserved arginine finger motif is provided in trans relative to the ATP-binding site of the Walker A box of the adjacent subunit. The six ATPase active sites, however, are likely to contribute differentially to the complex helicase activity. The existence of maternal and zygotic forms of mcm3 and mcm6 suggests that specific forms of mcm2-7 complexes may be used during different stages of development. May replace mmcm6 in the mcm2-7 complex. In Xenopus laevis (African clawed frog), this protein is Zygotic DNA replication licensing factor mcm6-A (zmcm6-a).